The sequence spans 468 residues: Cysteine--tRNA ligase (468 aa).

A Zn(2+)-binding site is contributed by C36. A 'HIGH' region motif is present at residues P38 to N48. 3 residues coordinate Zn(2+): C216, H241, and E245. Residues K274–S278 carry the 'KMSKS' region motif. K277 contacts ATP.

It belongs to the class-I aminoacyl-tRNA synthetase family. As to quaternary structure, monomer. The cofactor is Zn(2+).

It localises to the cytoplasm. It catalyses the reaction tRNA(Cys) + L-cysteine + ATP = L-cysteinyl-tRNA(Cys) + AMP + diphosphate. This Parvibaculum lavamentivorans (strain DS-1 / DSM 13023 / NCIMB 13966) protein is Cysteine--tRNA ligase.